We begin with the raw amino-acid sequence, 357 residues long: Arginine kinase Pro c 2.0101 (357 aa).

Residues 9-91 (KLEEGFKKLE…FDPIIEDYHK (83 aa)) form the Phosphagen kinase N-terminal domain. An L-arginine-binding site is contributed by 64-68 (GVGIY). The Phosphagen kinase C-terminal domain occupies 119–356 (FVISTRVRCG…LELIKIEKEM (238 aa)). Residues 122–126 (STRVR) and H185 contribute to the ATP site. Residue E225 coordinates L-arginine. Residue R229 coordinates ATP. L-arginine is bound at residue C271. ATP-binding positions include 280–284 (RASVH) and 309–314 (RGTRGE). E314 serves as a coordination point for L-arginine.

The protein belongs to the ATP:guanido phosphotransferase family. Glycosylated. In terms of tissue distribution, muscle (at protein level).

It carries out the reaction L-arginine + ATP = N(omega)-phospho-L-arginine + ADP + H(+). Catalyzes the reversible transfer of high energy ATP gamma-phosphate group to L-arginine. The sequence is that of Arginine kinase Pro c 2.0101 from Procambarus clarkii (Red swamp crayfish).